We begin with the raw amino-acid sequence, 359 residues long: Peptide chain release factor 1 (359 aa).

An N5-methylglutamine modification is found at Gln235.

The protein belongs to the prokaryotic/mitochondrial release factor family. In terms of processing, methylated by PrmC. Methylation increases the termination efficiency of RF1.

It localises to the cytoplasm. In terms of biological role, peptide chain release factor 1 directs the termination of translation in response to the peptide chain termination codons UAG and UAA. This Anaplasma marginale (strain Florida) protein is Peptide chain release factor 1.